Reading from the N-terminus, the 587-residue chain is Aspartate--tRNA ligase (587 aa).

Glutamate 174 contributes to the L-aspartate binding site. An aspartate region spans residues 198 to 201 (QITK). An L-aspartate-binding site is contributed by arginine 220. Residues 220–222 (RDE) and glutamine 229 contribute to the ATP site. Histidine 443 provides a ligand contact to L-aspartate. Glutamate 477 is a binding site for ATP. Arginine 484 is a binding site for L-aspartate. Residue 529–532 (GLDR) participates in ATP binding.

The protein belongs to the class-II aminoacyl-tRNA synthetase family. Type 1 subfamily. As to quaternary structure, homodimer.

The protein resides in the cytoplasm. It carries out the reaction tRNA(Asp) + L-aspartate + ATP = L-aspartyl-tRNA(Asp) + AMP + diphosphate. Its function is as follows. Catalyzes the attachment of L-aspartate to tRNA(Asp) in a two-step reaction: L-aspartate is first activated by ATP to form Asp-AMP and then transferred to the acceptor end of tRNA(Asp). This chain is Aspartate--tRNA ligase, found in Streptococcus pneumoniae serotype 19F (strain G54).